The chain runs to 249 residues: Indole-3-glycerol phosphate synthase (249 aa).

This sequence belongs to the TrpC family.

The enzyme catalyses 1-(2-carboxyphenylamino)-1-deoxy-D-ribulose 5-phosphate + H(+) = (1S,2R)-1-C-(indol-3-yl)glycerol 3-phosphate + CO2 + H2O. The protein operates within amino-acid biosynthesis; L-tryptophan biosynthesis; L-tryptophan from chorismate: step 4/5. In Pyrobaculum arsenaticum (strain DSM 13514 / JCM 11321 / PZ6), this protein is Indole-3-glycerol phosphate synthase.